The following is a 513-amino-acid chain: Cytochrome P450 86A1 (513 aa).

Residues 7 to 27 (ILTGYAVAALSVYALWFYFLS) traverse the membrane as a helical segment. Position 456 (cysteine 456) interacts with heme.

This sequence belongs to the cytochrome P450 family. Heme is required as a cofactor. As to expression, expressed in roots.

The protein localises to the membrane. The catalysed reaction is an omega-methyl-long-chain fatty acid + reduced [NADPH--hemoprotein reductase] + O2 = an omega-hydroxy-long-chain fatty acid + oxidized [NADPH--hemoprotein reductase] + H2O + H(+). Catalyzes the omega-hydroxylation of various fatty acids (FA). Acts on saturated and unsaturated fatty acids with chain lengths from C12 to C18 but not on hexadecane. This is Cytochrome P450 86A1 (CYP86A1) from Arabidopsis thaliana (Mouse-ear cress).